We begin with the raw amino-acid sequence, 98 residues long: uncharacterized protein (98 aa).

In terms of domain architecture, STAS spans 1-85 (MLETVPVRCV…GTLKQALENM (85 aa)).

Post-translationally, phosphorylated on threonine residue(s). Phosphorylated by PrkC and dephosphorylated by PrpC.

The protein resides in the cytoplasm. This is an uncharacterized protein from Bacillus subtilis (strain 168).